The sequence spans 369 residues: uncharacterized protein (369 aa).

4 disordered regions span residues 1 to 42, 60 to 107, 146 to 177, and 214 to 369; these read MRAA…NNNS, PSDL…KEDD, ALSM…NSSG, and LSSH…GDDD. Residues 12-24 show a composition bias toward polar residues; it reads VGPNNNNQSNTIN. Composition is skewed to low complexity over residues 30-42 and 70-86; these read SNSN…NNNS and YHSN…NSSS. The segment covering 87 to 101 has biased composition (polar residues); it reads AITSGTVAPSSSMNN. Over residues 155-169 the composition is skewed to acidic residues; the sequence is DSESDISEKEDDNDG. Positions 219–324 are enriched in low complexity; the sequence is NNNNNSSNNN…NNNNNNSNIY (106 aa).

This is an uncharacterized protein from Dictyostelium discoideum (Social amoeba).